Consider the following 493-residue polypeptide: Alginate production protein AlgE (493 aa).

The first 25 residues, 1–25 (MKLNPLMAAGMGLGFTLFWACPTLA), serve as a signal peptide directing secretion. Polar residues predominate over residues 93 to 111 (DPLEQSNSDGSGTQTSRGT). The interval 93–115 (DPLEQSNSDGSGTQTSRGTASER) is disordered.

It belongs to the AlgE family.

The protein localises to the cell outer membrane. It functions in the pathway glycan biosynthesis; alginate biosynthesis. In terms of biological role, has non-porin-like, channel-forming properties and probably functions as an alginate permeability pore. In Pseudomonas syringae pv. tomato (strain ATCC BAA-871 / DC3000), this protein is Alginate production protein AlgE (algE).